Consider the following 434-residue polypeptide: MLDIQLFRKDIDAVAQRLATRGYQLDVAAFQALEAERKQLQTQTEELQARRNSLSKQIGMLKGKGEDASAVMAEVGGIGDTLKASAARLDEIQAHLAELMLAIPNLPHESVPVGNDETQNVEVRRVGEPRQFDFAVRDHVDVGDKLGLDFDTAVKVTGSRFSMLRGGLARMNRALVQLMLDTHTQEHGYTEMYVPYMVNAASMRGTGQLPKFEEDLFKVPRKVGSEDGERIENFYLIPTAEVPLTNIVRDAIVAGEKLPLRFVAHTPCFRSEAGSYGKDTRGMIRQHQFDKVELVQVVPAAQSFEALEQLTGHAEAILKKLELPFRTIVLCTGDMGFGSTKTYDLEVWIPAQNTYREISSCSNMGDFQARRMQARMRAGQGKPELVHTLNGSGLAVGRTLVAILENYQNADGSVTVPAALQPYMGGITRLEPEM.

Residue 239 to 241 participates in L-serine binding; that stretch reads TAE. Position 270–272 (270–272) interacts with ATP; sequence RSE. E293 contacts L-serine. 357-360 is an ATP binding site; it reads EISS. S392 is an L-serine binding site.

It belongs to the class-II aminoacyl-tRNA synthetase family. Type-1 seryl-tRNA synthetase subfamily. As to quaternary structure, homodimer. The tRNA molecule binds across the dimer.

It localises to the cytoplasm. It carries out the reaction tRNA(Ser) + L-serine + ATP = L-seryl-tRNA(Ser) + AMP + diphosphate + H(+). It catalyses the reaction tRNA(Sec) + L-serine + ATP = L-seryl-tRNA(Sec) + AMP + diphosphate + H(+). The protein operates within aminoacyl-tRNA biosynthesis; selenocysteinyl-tRNA(Sec) biosynthesis; L-seryl-tRNA(Sec) from L-serine and tRNA(Sec): step 1/1. In terms of biological role, catalyzes the attachment of serine to tRNA(Ser). Is also able to aminoacylate tRNA(Sec) with serine, to form the misacylated tRNA L-seryl-tRNA(Sec), which will be further converted into selenocysteinyl-tRNA(Sec). The polypeptide is Serine--tRNA ligase (Cupriavidus necator (strain ATCC 17699 / DSM 428 / KCTC 22496 / NCIMB 10442 / H16 / Stanier 337) (Ralstonia eutropha)).